The sequence spans 184 residues: Adenine phosphoribosyltransferase (184 aa).

It belongs to the purine/pyrimidine phosphoribosyltransferase family. In terms of assembly, homodimer.

Its subcellular location is the cytoplasm. The enzyme catalyses AMP + diphosphate = 5-phospho-alpha-D-ribose 1-diphosphate + adenine. The protein operates within purine metabolism; AMP biosynthesis via salvage pathway; AMP from adenine: step 1/1. Its function is as follows. Catalyzes a salvage reaction resulting in the formation of AMP, that is energically less costly than de novo synthesis. This Sphingopyxis alaskensis (strain DSM 13593 / LMG 18877 / RB2256) (Sphingomonas alaskensis) protein is Adenine phosphoribosyltransferase.